Reading from the N-terminus, the 286-residue chain is Alpha/beta-gliadin (286 aa).

The N-terminal stretch at 1 to 20 (MKTFLILVLLAIVATTATTA) is a signal peptide. The interval 51–120 (LGQQQPFPPQ…QQPISQQQQQ (70 aa)) is disordered. Residues 56–71 (PFPPQQPYPQPQPFPS) are compositionally biased toward pro residues. Positions 72–92 (QLPYLQLQPFPQPQLPYSQPQ) are enriched in low complexity. Residues 93-104 (PFRPQQPYPQPQ) show a composition bias toward pro residues. The segment covering 105-120 (PQYSQPQQPISQQQQQ) has biased composition (low complexity).

This sequence belongs to the gliadin/glutenin family. Post-translationally, substrate of transglutaminase.

In terms of biological role, gliadin is the major seed storage protein in wheat. The chain is Alpha/beta-gliadin from Triticum aestivum (Wheat).